The chain runs to 378 residues: Chaperone protein DnaJ (378 aa).

The 65-residue stretch at 5 to 69 (EYYDRLGVSK…QKRAAYDQYG (65 aa)) folds into the J domain. A CR-type zinc finger spans residues 134–216 (GVEKEVSYNR…CHGTGHEKQA (83 aa)). Zn(2+) contacts are provided by Cys-147, Cys-150, Cys-164, Cys-167, Cys-190, Cys-193, Cys-204, and Cys-207. CXXCXGXG motif repeat units follow at residues 147 to 154 (CGTCLGSG), 164 to 171 (CRKCHGSG), 190 to 197 (CDICHGSG), and 204 to 211 (CQTCHGTG).

This sequence belongs to the DnaJ family. Homodimer. Requires Zn(2+) as cofactor.

The protein resides in the cytoplasm. Functionally, participates actively in the response to hyperosmotic and heat shock by preventing the aggregation of stress-denatured proteins and by disaggregating proteins, also in an autonomous, DnaK-independent fashion. Unfolded proteins bind initially to DnaJ; upon interaction with the DnaJ-bound protein, DnaK hydrolyzes its bound ATP, resulting in the formation of a stable complex. GrpE releases ADP from DnaK; ATP binding to DnaK triggers the release of the substrate protein, thus completing the reaction cycle. Several rounds of ATP-dependent interactions between DnaJ, DnaK and GrpE are required for fully efficient folding. Also involved, together with DnaK and GrpE, in the DNA replication of plasmids through activation of initiation proteins. The protein is Chaperone protein DnaJ of Streptococcus pyogenes.